The following is a 377-amino-acid chain: Gastricsin (377 aa).

Positions 1–5 are cleaved as a signal peptide; the sequence is QLLEA. 2 consecutive propeptides (activation peptide) follow at residues 6–31 and 32–48; these read AVVK…LGEF and LRTH…FGDL. The Peptidase A1 domain maps to 62–374; it reads YFGEISIGTP…DLSNNRVGFA (313 aa). Asp80 is an active-site residue. 2 cysteine pairs are disulfide-bonded: Cys93–Cys98 and Cys256–Cys260. Residue Asp265 is part of the active site. A disulfide bridge links Cys299 with Cys332.

It belongs to the peptidase A1 family. Each pepsinogen is converted to corresponding pepsin at pH 2.0 in part as a result of the release of a 47 AA activation segment and in part as a result of stepwise proteolytic cleavage via an intermediate form(s).

The protein resides in the secreted. It carries out the reaction More restricted specificity than pepsin A, but shows preferential cleavage at Tyr-|-Xaa bonds. High activity on hemoglobin.. Functionally, hydrolyzes a variety of proteins. This chain is Gastricsin (PGC), found in Macaca fuscata fuscata (Japanese macaque).